Consider the following 236-residue polypeptide: Small ribosomal subunit protein uS3 (236 aa).

In terms of domain architecture, KH type-2 spans 39–107 (IREFLTEELK…DTSLNIVEVR (69 aa)). The tract at residues 214–236 (ASERRAVEGDNQGSSSNRRRENA) is disordered.

The protein belongs to the universal ribosomal protein uS3 family. In terms of assembly, part of the 30S ribosomal subunit. Forms a tight complex with proteins S10 and S14.

Binds the lower part of the 30S subunit head. Binds mRNA in the 70S ribosome, positioning it for translation. The polypeptide is Small ribosomal subunit protein uS3 (Brucella abortus (strain S19)).